Here is a 182-residue protein sequence, read N- to C-terminus: ATP synthase subunit delta (182 aa).

It belongs to the ATPase delta chain family. F-type ATPases have 2 components, F(1) - the catalytic core - and F(0) - the membrane proton channel. F(1) has five subunits: alpha(3), beta(3), gamma(1), delta(1), epsilon(1). F(0) has three main subunits: a(1), b(2) and c(10-14). The alpha and beta chains form an alternating ring which encloses part of the gamma chain. F(1) is attached to F(0) by a central stalk formed by the gamma and epsilon chains, while a peripheral stalk is formed by the delta and b chains.

The protein localises to the cell inner membrane. Functionally, f(1)F(0) ATP synthase produces ATP from ADP in the presence of a proton or sodium gradient. F-type ATPases consist of two structural domains, F(1) containing the extramembraneous catalytic core and F(0) containing the membrane proton channel, linked together by a central stalk and a peripheral stalk. During catalysis, ATP synthesis in the catalytic domain of F(1) is coupled via a rotary mechanism of the central stalk subunits to proton translocation. This protein is part of the stalk that links CF(0) to CF(1). It either transmits conformational changes from CF(0) to CF(1) or is implicated in proton conduction. The chain is ATP synthase subunit delta from Bdellovibrio bacteriovorus (strain ATCC 15356 / DSM 50701 / NCIMB 9529 / HD100).